We begin with the raw amino-acid sequence, 275 residues long: Autophagy protein 5 (275 aa).

Met1 bears the N-acetylmethionine mark. Lys130 participates in a covalent cross-link: Glycyl lysine isopeptide (Lys-Gly) (interchain with G-Cter in ATG12).

This sequence belongs to the ATG5 family. In terms of assembly, forms a conjugate with ATG12. Part of the minor complex composed of 4 sets of ATG12-ATG5 and ATG16L1 (400 kDa); this complex interacts with ATG3 leading to disruption of ATG7 interaction and promotion of ATG8-like proteins lipidation. Forms an 800-kDa complex composed of ATG12-ATG5 and ATG16L2. The ATG12-ATG5 conjugate interacts with RAB33A; this interaction is bridged by ATG16L1 and promotes ATG12-ATG5-ATG16L1 complex recruitment to phagophores. Interacts with TECPR1; the interaction is direct and does not take place when ATG16L1 is associated with the ATG5-ATG12 conjugate. Interacts with DHX58/RIG-1, IFIH1/MDA5 and MAVS/IPS-1 in monomeric form as well as in ATG12-ATG5 conjugate form. The interaction with MAVS is further enhanced upon vesicular stomatitis virus (VSV) infection. Interacts with ATG3. Interacts with ATG7 and ATG10. Interacts with FADD. Interacts with Bassoon/BSN; this interaction is important for the regulation of presynaptic autophagy. Interacts with ATG16L2. Post-translationally, conjugated to ATG12; which is essential for autophagy, but is not required for association with isolation membrane. Acetylated by EP300.

It is found in the cytoplasm. It localises to the preautophagosomal structure membrane. Its function is as follows. Involved in autophagic vesicle formation. Conjugation with ATG12, through a ubiquitin-like conjugating system involving ATG7 as an E1-like activating enzyme and ATG10 as an E2-like conjugating enzyme, is essential for its function. The ATG12-ATG5 conjugate acts as an E3-like enzyme which is required for lipidation of ATG8 family proteins and their association to the vesicle membranes. Involved in mitochondrial quality control after oxidative damage, and in subsequent cellular longevity. Plays a critical role in multiple aspects of lymphocyte development and is essential for both B and T lymphocyte survival and proliferation. Required for optimal processing and presentation of antigens for MHC II. Involved in the maintenance of axon morphology and membrane structures, as well as in normal adipocyte differentiation. Promotes primary ciliogenesis through removal of OFD1 from centriolar satellites and degradation of IFT20 via the autophagic pathway. As part of the ATG8 conjugation system with ATG12 and ATG16L1, required for recruitment of LRRK2 to stressed lysosomes and induction of LRRK2 kinase activity in response to lysosomal stress. In terms of biological role, may play an important role in the apoptotic process, possibly within the modified cytoskeleton. Its expression is a relatively late event in the apoptotic process, occurring downstream of caspase activity. Plays a crucial role in IFN-gamma-induced autophagic cell death by interacting with FADD. In Pongo abelii (Sumatran orangutan), this protein is Autophagy protein 5.